The primary structure comprises 344 residues: Ferrochelatase (344 aa).

Positions 214 and 295 each coordinate Fe cation.

Belongs to the ferrochelatase family.

It localises to the cytoplasm. It catalyses the reaction heme b + 2 H(+) = protoporphyrin IX + Fe(2+). The protein operates within porphyrin-containing compound metabolism; protoheme biosynthesis; protoheme from protoporphyrin-IX: step 1/1. In terms of biological role, catalyzes the ferrous insertion into protoporphyrin IX. This chain is Ferrochelatase, found in Agrobacterium fabrum (strain C58 / ATCC 33970) (Agrobacterium tumefaciens (strain C58)).